The sequence spans 151 residues: Extracellular globin-4 (151 aa).

Positions 6-151 constitute a Globin domain; the sequence is CCSYEDRREI…LVARIAKDLP (146 aa). Cys-7 and Cys-138 are disulfide-bonded. His-101 lines the heme b pocket.

This sequence belongs to the globin family. The extracellular hemoglobin of the earthworm consists of 12 subunits that have a hexagonal bilayer structure with a molecular weight near 3.8 million. Each one-twelfth subunit is composed primarily of disulfide linked trimers (chains A, B, and C) and monomers (chain D).

The protein resides in the secreted. The protein is Extracellular globin-4 of Lumbricus terrestris (Common earthworm).